The sequence spans 119 residues: Large ribosomal subunit protein uL18 (119 aa).

Belongs to the universal ribosomal protein uL18 family. Part of the 50S ribosomal subunit; part of the 5S rRNA/L5/L18/L25 subcomplex. Contacts the 5S and 23S rRNAs.

Functionally, this is one of the proteins that bind and probably mediate the attachment of the 5S RNA into the large ribosomal subunit, where it forms part of the central protuberance. This Cereibacter sphaeroides (strain ATCC 17029 / ATH 2.4.9) (Rhodobacter sphaeroides) protein is Large ribosomal subunit protein uL18.